We begin with the raw amino-acid sequence, 74 residues long: Exodeoxyribonuclease 7 small subunit (74 aa).

The protein belongs to the XseB family. Heterooligomer composed of large and small subunits.

The protein resides in the cytoplasm. It carries out the reaction Exonucleolytic cleavage in either 5'- to 3'- or 3'- to 5'-direction to yield nucleoside 5'-phosphates.. In terms of biological role, bidirectionally degrades single-stranded DNA into large acid-insoluble oligonucleotides, which are then degraded further into small acid-soluble oligonucleotides. The polypeptide is Exodeoxyribonuclease 7 small subunit (Neisseria meningitidis serogroup A / serotype 4A (strain DSM 15465 / Z2491)).